Reading from the N-terminus, the 285-residue chain is tRNA pseudouridine synthase B (285 aa).

Catalysis depends on aspartate 38, which acts as the Nucleophile.

This sequence belongs to the pseudouridine synthase TruB family. Type 1 subfamily.

It catalyses the reaction uridine(55) in tRNA = pseudouridine(55) in tRNA. In terms of biological role, responsible for synthesis of pseudouridine from uracil-55 in the psi GC loop of transfer RNAs. This chain is tRNA pseudouridine synthase B, found in Geobacillus kaustophilus (strain HTA426).